A 166-amino-acid chain; its full sequence is MSKVLEAKQSAVEEIKTKLSASASTVIVDYRGLNVGEITELRKQLRDAGIEFKVYKNSLTRRAVEANGYEGLEGALTGPNAIAFSNEDVVAPAKILNDFAKDHEALEIKAGVIEGKVASLEEIKALATLPSREGLLSMLCNVLQAPVRGLAIATKAVADQKEGQEA.

The protein belongs to the universal ribosomal protein uL10 family. As to quaternary structure, part of the ribosomal stalk of the 50S ribosomal subunit. The N-terminus interacts with L11 and the large rRNA to form the base of the stalk. The C-terminus forms an elongated spine to which L12 dimers bind in a sequential fashion forming a multimeric L10(L12)X complex.

Forms part of the ribosomal stalk, playing a central role in the interaction of the ribosome with GTP-bound translation factors. The chain is Large ribosomal subunit protein uL10 from Listeria monocytogenes serotype 4b (strain CLIP80459).